The following is a 104-amino-acid chain: Co-chaperonin GroES (104 aa).

It belongs to the GroES chaperonin family. Heptamer of 7 subunits arranged in a ring. Interacts with the chaperonin GroEL.

The protein resides in the cytoplasm. Its function is as follows. Together with the chaperonin GroEL, plays an essential role in assisting protein folding. The GroEL-GroES system forms a nano-cage that allows encapsulation of the non-native substrate proteins and provides a physical environment optimized to promote and accelerate protein folding. GroES binds to the apical surface of the GroEL ring, thereby capping the opening of the GroEL channel. The chain is Co-chaperonin GroES from Acidiphilium cryptum (strain JF-5).